The following is a 622-amino-acid chain: FERM domain-containing protein 6 (622 aa).

The region spanning Arg16–Gln328 is the FERM domain. The segment at Leu357–Asp452 is disordered. 2 stretches are compositionally biased toward low complexity: residues His384–Ser395 and Ser425–Val438. At Ser522 the chain carries Phosphoserine. At Thr523 the chain carries Phosphothreonine. Phosphoserine is present on residues Ser525, Ser542, and Ser544.

It is found in the cytoplasm. Its subcellular location is the cell membrane. This chain is FERM domain-containing protein 6 (Frmd6), found in Mus musculus (Mouse).